We begin with the raw amino-acid sequence, 201 residues long: Charged multivesicular body protein 6 (201 aa).

A lipid anchor (N-myristoyl glycine) is attached at G2. The stretch at 10 to 145 (QSRVTEQDKA…YQRQIDELLA (136 aa)) forms a coiled coil. S119 is subject to Phosphoserine. Position 130 is a phosphothreonine (T130). A Type-2 MIT-interacting motif motif is present at residues 168–179 (IELPEVPSEPLP). Residues 170 to 181 (LPEVPSEPLPEK) are interaction with VPS4A.

This sequence belongs to the SNF7 family. In terms of assembly, probable core component of the endosomal sorting required for transport complex III (ESCRT-III). ESCRT-III components are thought to multimerize to form a flat lattice on the perimeter membrane of the endosome. Several assembly forms of ESCRT-III may exist that interact and act sequentially. Interacts with VPS4A; the interaction is direct. Interacts with VPS4B; the interaction is direct. Interacts with CHMP4A, CHMP4B and CHMP4C. Interacts with SNF8, VPS25 and VPS36. Post-translationally, ISGylated in a CHMP5-dependent manner. Isgylation weakens its interaction with VPS4A. In terms of tissue distribution, ubiquitously expressed.

Its subcellular location is the endomembrane system. The protein localises to the endosome membrane. It localises to the late endosome membrane. It is found in the membrane. Probable core component of the endosomal sorting required for transport complex III (ESCRT-III) which is involved in multivesicular bodies (MVBs) formation and sorting of endosomal cargo proteins into MVBs. MVBs contain intraluminal vesicles (ILVs) that are generated by invagination and scission from the limiting membrane of the endosome and mostly are delivered to lysosomes enabling degradation of membrane proteins, such as stimulated growth factor receptors, lysosomal enzymes and lipids. The MVB pathway appears to require the sequential function of ESCRT-O, -I,-II and -III complexes. ESCRT-III proteins mostly dissociate from the invaginating membrane before the ILV is released. The ESCRT machinery also functions in topologically equivalent membrane fission events, such as the terminal stages of cytokinesis and the budding of enveloped viruses (HIV-1 and other lentiviruses). ESCRT-III proteins are believed to mediate the necessary vesicle extrusion and/or membrane fission activities, possibly in conjunction with the AAA ATPase VPS4. In the ESCRT-III complex, it probably serves as an acceptor for the ESCRT-II complex on endosomal membranes. The sequence is that of Charged multivesicular body protein 6 (CHMP6) from Homo sapiens (Human).